Consider the following 365-residue polypeptide: Gibberellin 20 oxidase 1-A (365 aa).

A Fe2OG dioxygenase domain is found at 199 to 299; it reads GNDSIMRLNY…RKSLAFFLCP (101 aa). Fe cation contacts are provided by H224, D226, and H280. Residue R290 is part of the active site.

The protein belongs to the iron/ascorbate-dependent oxidoreductase family. GA20OX subfamily. The cofactor is Fe cation. Requires L-ascorbate as cofactor. Expressed in nodes and the ear of the elongating stem.

The catalysed reaction is gibberellin A12 + 2 2-oxoglutarate + 3 O2 + H(+) = gibberellin A9 + 2 succinate + 3 CO2 + 2 H2O. The enzyme catalyses gibberellin A53 + 2 2-oxoglutarate + 3 O2 + H(+) = gibberellin A20 + 2 succinate + 3 CO2 + 2 H2O. In terms of biological role, key oxidase enzyme in the biosynthesis of gibberellin that catalyzes the conversion of GA12 and GA53 to GA9 and GA20 respectively, via a three-step oxidation at C-20 of the GA skeleton. The polypeptide is Gibberellin 20 oxidase 1-A (GA20ox1A) (Triticum aestivum (Wheat)).